The sequence spans 498 residues: Glycerol kinase (498 aa).

T14 contacts ADP. ATP-binding residues include T14, T15, and S16. Residue T14 coordinates sn-glycerol 3-phosphate. R18 is a binding site for ADP. The sn-glycerol 3-phosphate site is built by R84, E85, and Y136. Residues R84, E85, and Y136 each coordinate glycerol. H232 bears the Phosphohistidine; by HPr mark. Residue D246 participates in sn-glycerol 3-phosphate binding. Residues D246 and Q247 each contribute to the glycerol site. ADP-binding residues include T268 and G311. ATP is bound by residues T268, G311, Q315, and G412. ADP is bound by residues G412 and N416.

Belongs to the FGGY kinase family. As to quaternary structure, homotetramer and homodimer (in equilibrium). In terms of processing, the phosphoenolpyruvate-dependent sugar phosphotransferase system (PTS), including enzyme I, and histidine-containing protein (HPr) are required for the phosphorylation, which leads to the activation of the enzyme.

It carries out the reaction glycerol + ATP = sn-glycerol 3-phosphate + ADP + H(+). It functions in the pathway polyol metabolism; glycerol degradation via glycerol kinase pathway; sn-glycerol 3-phosphate from glycerol: step 1/1. With respect to regulation, activated by phosphorylation and inhibited by fructose 1,6-bisphosphate (FBP). In terms of biological role, key enzyme in the regulation of glycerol uptake and metabolism. Catalyzes the phosphorylation of glycerol to yield sn-glycerol 3-phosphate. In Lactococcus lactis subsp. lactis (strain IL1403) (Streptococcus lactis), this protein is Glycerol kinase.